The primary structure comprises 952 residues: Leucine--tRNA ligase (952 aa).

The 'HIGH' region signature appears at 66–77 (PYPSGAGLHVGH). The short motif at 722–726 (KMGKS) is the 'KMSKS' region element. Lysine 725 lines the ATP pocket.

It belongs to the class-I aminoacyl-tRNA synthetase family.

It is found in the cytoplasm. It catalyses the reaction tRNA(Leu) + L-leucine + ATP = L-leucyl-tRNA(Leu) + AMP + diphosphate. The polypeptide is Leucine--tRNA ligase (Corynebacterium glutamicum (strain R)).